Consider the following 593-residue polypeptide: Methionine--tRNA ligase, mitochondrial (593 aa).

The transit peptide at 1–29 (MLRVSAFRLLGRRGASRVSLLEDFSFRYY) directs the protein to the mitochondrion. Positions 52–62 (FYVNAAPHIGH) match the 'HIGH' region motif. A 'KMSKS' region motif is present at residues 347–351 (KMSKS). Lys-350 lines the ATP pocket.

The protein belongs to the class-I aminoacyl-tRNA synthetase family.

The protein localises to the mitochondrion matrix. The catalysed reaction is tRNA(Met) + L-methionine + ATP = L-methionyl-tRNA(Met) + AMP + diphosphate. This Bos taurus (Bovine) protein is Methionine--tRNA ligase, mitochondrial (MARS2).